The chain runs to 243 residues: Probable fructoselysine utilization operon transcriptional repressor (243 aa).

An HTH gntR-type domain is found at 10-78 (QLLYATVRQR…QGKGTFVQSQ (69 aa)). The H-T-H motif DNA-binding region spans 38 to 57 (ENELCTQYNVSRITIRKAIS).

Its pathway is carbohydrate metabolism; fructoselysine degradation [regulation]. Its function is as follows. May regulate the transcription of the frlABCDR operon, involved in the utilization of fructoselysine and psicoselysine. The protein is Probable fructoselysine utilization operon transcriptional repressor (frlR) of Escherichia coli O157:H7.